A 71-amino-acid chain; its full sequence is uncharacterized protein (71 aa).

Residues 1 to 71 (MLFETLKSLS…AFFSRPFYSE (71 aa)) form a disordered region. Residues 7–33 (KSLSQQNGGQFSDEQSFESPISSSFNG) show a composition bias toward polar residues. Residues 35–65 (SMPFGSPSSTMSSSYKGNTNSSTKSSSAFFS) show a composition bias toward low complexity.

This is an uncharacterized protein from Dictyostelium discoideum (Social amoeba).